Here is a 231-residue protein sequence, read N- to C-terminus: Large ribosomal subunit protein uL1 (231 aa).

The protein belongs to the universal ribosomal protein uL1 family. In terms of assembly, part of the 50S ribosomal subunit.

Binds directly to 23S rRNA. The L1 stalk is quite mobile in the ribosome, and is involved in E site tRNA release. Functionally, protein L1 is also a translational repressor protein, it controls the translation of the L11 operon by binding to its mRNA. This is Large ribosomal subunit protein uL1 from Francisella tularensis subsp. tularensis (strain WY96-3418).